A 362-amino-acid polypeptide reads, in one-letter code: Histidinol-phosphate aminotransferase 1 (362 aa).

K226 bears the N6-(pyridoxal phosphate)lysine mark.

This sequence belongs to the class-II pyridoxal-phosphate-dependent aminotransferase family. Histidinol-phosphate aminotransferase subfamily. Homodimer. Pyridoxal 5'-phosphate is required as a cofactor.

The catalysed reaction is L-histidinol phosphate + 2-oxoglutarate = 3-(imidazol-4-yl)-2-oxopropyl phosphate + L-glutamate. Its pathway is amino-acid biosynthesis; L-histidine biosynthesis; L-histidine from 5-phospho-alpha-D-ribose 1-diphosphate: step 7/9. The protein is Histidinol-phosphate aminotransferase 1 of Dechloromonas aromatica (strain RCB).